The sequence spans 289 residues: G1/S-specific cyclin-D2 (289 aa).

The Cyclin N-terminal domain maps to V26–L151. Residues D264–L289 are disordered. S271 bears the Phosphoserine mark. The residue at position 280 (T280) is a Phosphothreonine.

The protein belongs to the cyclin family. Cyclin D subfamily. Interacts with either CDK4 or CDK6 protein kinase to form a serine/threonine kinase holoenzyme complex. The cyclin subunit imparts substrate specificity to the complex. Post-translationally, phosphorylation at Thr-280 by MAP kinases is required for ubiquitination and degradation by the DCX(AMBRA1) complex. In terms of processing, ubiquitinated by the DCX(AMBRA1) complex during the transition from G1 to S cell phase, leading to its degradation: ubiquitination is dependent on Thr-280 phosphorylation. The DCX(AMBRA1) complex represents the major regulator of CCND2 stability during the G1/S transition. Polyubiquitinated by the SCF(FBXL2) complex, leading to proteasomal degradation.

The protein resides in the nucleus. The protein localises to the cytoplasm. Its subcellular location is the nucleus membrane. Regulatory component of the cyclin D2-CDK4 (DC) complex that phosphorylates and inhibits members of the retinoblastoma (RB) protein family including RB1 and regulates the cell-cycle during G(1)/S transition. Phosphorylation of RB1 allows dissociation of the transcription factor E2F from the RB/E2F complex and the subsequent transcription of E2F target genes which are responsible for the progression through the G(1) phase. Hypophosphorylates RB1 in early G(1) phase. Cyclin D-CDK4 complexes are major integrators of various mitogenenic and antimitogenic signals. The chain is G1/S-specific cyclin-D2 from Homo sapiens (Human).